The following is a 343-amino-acid chain: Protein RecA (343 aa).

66–73 (GPESSGKT) contacts ATP.

It belongs to the RecA family.

The protein resides in the cytoplasm. Can catalyze the hydrolysis of ATP in the presence of single-stranded DNA, the ATP-dependent uptake of single-stranded DNA by duplex DNA, and the ATP-dependent hybridization of homologous single-stranded DNAs. It interacts with LexA causing its activation and leading to its autocatalytic cleavage. The protein is Protein RecA of Rickettsia africae (strain ESF-5).